Reading from the N-terminus, the 391-residue chain is Carbamoyl phosphate synthase small chain (391 aa).

Residues 1-202 (MTQPAILVLE…AHASAGSGEE (202 aa)) are CPSase. L-glutamine-binding residues include S47, G254, and G256. Residues 206 to 391 (KVVAYDYGVK…RFVDLMAARA (186 aa)) enclose the Glutamine amidotransferase type-1 domain. The active-site Nucleophile is the C282. Residues L283, Q286, N324, G326, and F327 each contribute to the L-glutamine site. Catalysis depends on residues H366 and E368.

It belongs to the CarA family. In terms of assembly, composed of two chains; the small (or glutamine) chain promotes the hydrolysis of glutamine to ammonia, which is used by the large (or ammonia) chain to synthesize carbamoyl phosphate. Tetramer of heterodimers (alpha,beta)4.

The enzyme catalyses hydrogencarbonate + L-glutamine + 2 ATP + H2O = carbamoyl phosphate + L-glutamate + 2 ADP + phosphate + 2 H(+). It carries out the reaction L-glutamine + H2O = L-glutamate + NH4(+). It participates in amino-acid biosynthesis; L-arginine biosynthesis; carbamoyl phosphate from bicarbonate: step 1/1. The protein operates within pyrimidine metabolism; UMP biosynthesis via de novo pathway; (S)-dihydroorotate from bicarbonate: step 1/3. Functionally, small subunit of the glutamine-dependent carbamoyl phosphate synthetase (CPSase). CPSase catalyzes the formation of carbamoyl phosphate from the ammonia moiety of glutamine, carbonate, and phosphate donated by ATP, constituting the first step of 2 biosynthetic pathways, one leading to arginine and/or urea and the other to pyrimidine nucleotides. The small subunit (glutamine amidotransferase) binds and cleaves glutamine to supply the large subunit with the substrate ammonia. This is Carbamoyl phosphate synthase small chain from Xanthomonas axonopodis pv. citri (strain 306).